Reading from the N-terminus, the 55-residue chain is MVWSQIERRKIMEQWPDMHNAEISKRLGKRWKLLPDYEKIPFIKEAERLRLKHMA.

Positions 1–55 (MVWSQIERRKIMEQWPDMHNAEISKRLGKRWKLLPDYEKIPFIKEAERLRLKHMA) form a DNA-binding region, HMG box.

It localises to the nucleus. The sequence is that of Protein SOX-19 (Sox19) from Mus musculus (Mouse).